The chain runs to 332 residues: tRNA-dihydrouridine synthase B (332 aa).

FMN-binding positions include 16–18 and Gln70; that span reads PMA. Cys100 (proton donor) is an active-site residue. FMN contacts are provided by residues Lys139, 200-202, and 224-225; these read NGD and GR.

This sequence belongs to the Dus family. DusB subfamily. Requires FMN as cofactor.

It catalyses the reaction a 5,6-dihydrouridine in tRNA + NAD(+) = a uridine in tRNA + NADH + H(+). The enzyme catalyses a 5,6-dihydrouridine in tRNA + NADP(+) = a uridine in tRNA + NADPH + H(+). In terms of biological role, catalyzes the synthesis of 5,6-dihydrouridine (D), a modified base found in the D-loop of most tRNAs, via the reduction of the C5-C6 double bond in target uridines. In Pasteurella multocida (strain Pm70), this protein is tRNA-dihydrouridine synthase B.